A 214-amino-acid polypeptide reads, in one-letter code: Riboflavin kinase (214 aa).

The segment at 1–26 is disordered; that stretch reads MRPDGPRDPVAGPDSGPEPPYPVRLS. 2 residues coordinate Mg(2+): threonine 44 and asparagine 46. Glutamate 116 acts as the Nucleophile in catalysis.

This sequence belongs to the flavokinase family. Zn(2+) is required as a cofactor. Mg(2+) serves as cofactor.

The catalysed reaction is riboflavin + ATP = FMN + ADP + H(+). It functions in the pathway cofactor biosynthesis; FMN biosynthesis; FMN from riboflavin (ATP route): step 1/1. Functionally, catalyzes the phosphorylation of riboflavin (vitamin B2) to form flavin mononucleotide (FMN) coenzyme. The chain is Riboflavin kinase (fmn1) from Aspergillus fumigatus (strain ATCC MYA-4609 / CBS 101355 / FGSC A1100 / Af293) (Neosartorya fumigata).